The primary structure comprises 1220 residues: MAIDVNKFESMQIGLASPDKIRSWSYGEVKKPETINYRTLKPEKDGLFDERIFGPTKDYECACGKYKRIRYKGIVCDRCGVEVTSSKVRRERMGHIELAAPVTHIWYFKGIPSRMGLVLDMSPRSLEEIIYFASYVVIEPGDAPVEKKQLMTEREYRELKREYGASFKAGMGAEAIKDLLASVDLAAEADQLKRELQEATGQKRVRAVRRLDIIEAFLQSDNKPQWMVMDVIPVIPPDLRPMVQLEGGRFATSDLNDLYRRVINRNNRLKRLLDLNAPGIIVQNEKRMLQEAVDALIDNGRRGRPVAGPGNRPLKSLSHMLKGKQGRFRQNLLGKRVDYSGRSVIDVGPFLKMNQMGLPRPMAIELFRPFIMKELTTRKLAGNVKSAKRKIDKADEDVMDVLEDVIKEHPVLLNRAPTLHRLGIQAFEPVLVSGKAMRLHPLVTEAYNADFDGDQMAIHVPLSDEAQAEARLLMLAAGHILAPKDGKPIVAPSQDMVIGNYYLTTEEAGREGEGMIFSSVEEAKIAFASKVVHYHTRIGIQTSSFPEAKPFTDEQRSKIMVTSVGKLIFNEILPVDFPYINEPSEDNFKGISDQFFIEPGEDIHDYLADTAVIGAFKKGFLSDVIAEVYKRYKVTETSLLLDRMKDLGYEKSTESGLTVSMNDVTELTEKPAILEDAHKQVATVTKQFRRGLITDSERYQRVTEIWTKAKDVIQDKLIASFEPTNPIFMMQDSGARGNISNFVQLAGMRGLMAGPGGKIIELPVTANFREGLTVMEMFISTHGARKGMSDTALKTANSGYLTRRLVDVAQDVIVREWNNNADRGVAVKAIMDGTSVVEPLYDRILGRYAMKSVFNPETGDKLVSRNEMIDEDVAKAIVAAGIEEVTIRSVFTSTTEHGVSVLDYGRNLATGEEVEVGEAVGTVAAQSIGEPGTQLTMRNFHTGGVAGGNDITQGLPRVQEIVEARIPKGRAEISEVTGTVVAIEENPAERTKAVTIEGETDTRTYTLPLAARMRFAEGDDIQRGDAINEGPIDPKELLAVTDTLTTESYMLTEIQKVYRLQGIEVSDKHIEVMIRQMLRKVRVMDPGETSLLPGMLMDIADFQRANEPALFDGLVPATARPVLLGITKAALETNSFLSAASFQETTRVLTDAAIRGKNDPLVGLKENVIIGKIIPAGTGMAEYRKIKSKVVGEVVAQPEVEQEPTPDIPKLDDVAKSFEE.

Positions 61, 63, 76, and 79 each coordinate Zn(2+). Mg(2+) is bound by residues Asp450, Asp452, and Asp454. The interval 1197-1220 is disordered; that stretch reads QPEVEQEPTPDIPKLDDVAKSFEE. The segment covering 1209-1220 has biased composition (basic and acidic residues); the sequence is PKLDDVAKSFEE.

This sequence belongs to the RNA polymerase beta' chain family. In terms of assembly, the RNAP catalytic core consists of 2 alpha, 1 beta, 1 beta' and 1 omega subunit. When a sigma factor is associated with the core the holoenzyme is formed, which can initiate transcription. Mg(2+) is required as a cofactor. It depends on Zn(2+) as a cofactor.

It carries out the reaction RNA(n) + a ribonucleoside 5'-triphosphate = RNA(n+1) + diphosphate. DNA-dependent RNA polymerase catalyzes the transcription of DNA into RNA using the four ribonucleoside triphosphates as substrates. The protein is DNA-directed RNA polymerase subunit beta' of Leuconostoc citreum (strain KM20).